The chain runs to 296 residues: HTH-type transcriptional activator AmpR (296 aa).

The 58-residue stretch at 6–63 (LPLNALRAFEASARHLSFTRAAIELCVTQAAVSHQVKSLEERLGVALFKRLPRGLMLT) folds into the HTH lysR-type domain. The segment at residues 23–42 (FTRAAIELCVTQAAVSHQVK) is a DNA-binding region (H-T-H motif). The segment at 83–296 (LLERFEGGHY…EMAAVEARGR (214 aa)) is includes the LysR substrate-binding / effector-binding domain, involved in binding to specific cell-wall-derived muropeptide products, some of which have signaling functions, leading to disparate responses such as antibiotic resistance, virulence, and host cell inflammation. Positions 91-289 (HYRDVLTVGA…AFRGWLLEMA (199 aa)) constitute a LysR substrate-binding domain.

It belongs to the LysR transcriptional regulatory family. As to quaternary structure, homodimer.

The protein resides in the cytoplasm. Its subcellular location is the membrane. In terms of biological role, transcription regulator that plays a critical role in the expression of beta-lactamase AmpC, acting by positive regulation of the ampC gene. Has a wider role in the regulation of expression of genes involved in proteolysis, quorum sensing, and virulence. Acts by binding directly to the promoter region of the ampC gene. Probably does not regulate transcription of its own gene. The sequence is that of HTH-type transcriptional activator AmpR (ampR) from Pseudomonas aeruginosa (strain ATCC 15692 / DSM 22644 / CIP 104116 / JCM 14847 / LMG 12228 / 1C / PRS 101 / PAO1).